Here is a 154-residue protein sequence, read N- to C-terminus: uncharacterized protein (154 aa).

Transmembrane regions (helical) follow at residues 20–42 (FRLF…GQFG), 62–84 (FFGY…AVLL), 91–109 (ALGA…LINY), and 113–132 (IGVQ…LLWM).

It localises to the cell membrane. This is an uncharacterized protein from Bacillus subtilis (strain 168).